We begin with the raw amino-acid sequence, 337 residues long: Cytoskeleton protein RodZ (337 aa).

Residues 1 to 111 (MNTEATHDQN…LGKRRKKRDG (111 aa)) lie on the Cytoplasmic side of the membrane. The HTH cro/C1-type domain maps to 19–71 (LRNAREQLGLSQQAVAERLCLKVSTVRDIEEDKAPADLASTFLRGYIRSYARL). The segment at residues 30–49 (QQAVAERLCLKVSTVRDIEE) is a DNA-binding region (H-T-H motif). The helical; Signal-anchor for type II membrane protein transmembrane segment at 112–132 (WLMTFTWLVLFVVIGLSGAWW) threads the bilayer. At 133 to 337 (WQDHKAQQEE…TLNAEQSPAQ (205 aa)) the chain is on the periplasmic side. The span at 145 to 167 (TMADQSSAELSSNSEQGQSVPLN) shows a compositional bias: polar residues. A disordered region spans residues 145 to 236 (TMADQSSAEL…TAATTPDGAA (92 aa)). Residues 168–207 (TSTTTDPATTSTPPASVDTTATNTQTPAVTAPAPAVDPQQ) show a composition bias toward low complexity. A compositionally biased stretch (polar residues) spans 208–218 (NAVVSPSQANV). Positions 219–236 (DTAATPAPTAATTPDGAA) are enriched in low complexity.

The protein belongs to the RodZ family.

It localises to the cell inner membrane. In terms of biological role, cytoskeletal protein that is involved in cell-shape control through regulation of the length of the long axis. This is Cytoskeleton protein RodZ from Escherichia coli O139:H28 (strain E24377A / ETEC).